The primary structure comprises 244 residues: Phosphoribosyl isomerase A (244 aa).

The Proton acceptor role is filled by Asp10. Asp129 (proton donor) is an active-site residue.

It belongs to the HisA/HisF family.

Its subcellular location is the cytoplasm. The catalysed reaction is 1-(5-phospho-beta-D-ribosyl)-5-[(5-phospho-beta-D-ribosylamino)methylideneamino]imidazole-4-carboxamide = 5-[(5-phospho-1-deoxy-D-ribulos-1-ylimino)methylamino]-1-(5-phospho-beta-D-ribosyl)imidazole-4-carboxamide. It catalyses the reaction N-(5-phospho-beta-D-ribosyl)anthranilate = 1-(2-carboxyphenylamino)-1-deoxy-D-ribulose 5-phosphate. Its pathway is amino-acid biosynthesis; L-histidine biosynthesis; L-histidine from 5-phospho-alpha-D-ribose 1-diphosphate: step 4/9. It functions in the pathway amino-acid biosynthesis; L-tryptophan biosynthesis; L-tryptophan from chorismate: step 3/5. In terms of biological role, involved in both the histidine and tryptophan biosynthetic pathways. The polypeptide is Phosphoribosyl isomerase A (Mycobacterium ulcerans (strain Agy99)).